Consider the following 461-residue polypeptide: Cysteine--tRNA ligase (461 aa).

Residue Cys30 coordinates Zn(2+). Positions 32–42 match the 'HIGH' region motif; that stretch reads VTIYDLCHIGH. Residues Cys211, His236, and Glu240 each coordinate Zn(2+). Positions 268-272 match the 'KMSKS' region motif; the sequence is KMSKS. Lys271 is an ATP binding site.

It belongs to the class-I aminoacyl-tRNA synthetase family. In terms of assembly, monomer. It depends on Zn(2+) as a cofactor.

The protein localises to the cytoplasm. The enzyme catalyses tRNA(Cys) + L-cysteine + ATP = L-cysteinyl-tRNA(Cys) + AMP + diphosphate. The sequence is that of Cysteine--tRNA ligase from Shewanella putrefaciens (strain CN-32 / ATCC BAA-453).